The chain runs to 304 residues: MTKVSVVGAAGTVGAAAGYNIALRDIADEVVFVDIPDKEDDTVGQAADTNHGIAYDSNTRVRQGGYEDTAGSDVVVITAGIPRQPGQTRIDLAGDNAPIMEDIQSSLDEHNDDYISLTTSNPVDLLNRHLYEAGDRSREQVIGFGGRLDSARFRYVLSEEFDAPVQNVEGTILGEHGDAQVPVFSKVRVDGTDPEFSGDEKEQLLGDLQESAMDVIERKGATEWGPARGVAHMVEAILHDTGEVLPASVKLEGEFGHEDTAFGVPVRLGSNGVEEIVEWDLDDYEQDLMADAAEKLSDQYDKIS.

NAD(+) contacts are provided by residues Gly-8–Gly-14 and Asp-34. Substrate is bound by residues Arg-83 and Arg-89. NAD(+) is bound by residues Asn-96 and Thr-119–Asn-121. The substrate site is built by Asn-121 and Arg-152. The active-site Proton acceptor is the His-176.

Belongs to the LDH/MDH superfamily. In terms of assembly, homotetramer; arranged as a dimer of dimers.

Its subcellular location is the cytoplasm. The enzyme catalyses (S)-malate + NAD(+) = oxaloacetate + NADH + H(+). Its function is as follows. Catalyzes the reversible oxidation of malate to oxaloacetate. This is Malate dehydrogenase (mdh) from Haloarcula marismortui (strain ATCC 43049 / DSM 3752 / JCM 8966 / VKM B-1809) (Halobacterium marismortui).